The primary structure comprises 827 residues: Sporozoite surface protein 2 (827 aa).

The first 22 residues, 1 to 22, serve as a signal peptide directing secretion; the sequence is MKLLGNSKYIFVVLLLCISVFL. Residues 43–228 form the VWFA domain; that stretch reads DIHILLDGSG…NMIKPFLTKV (186 aa). One can recognise a TSP type-1 domain in the interval 235–281; sequence IAHCGKWEEWSECSTTCDEGRKIRRRQILHPGCVSEMTTPCKVRDCP. Disulfide bonds link C238/C267, C247/C275, and C251/C280. Residues 278–761 form a disordered region; that stretch reads RDCPQIPIPP…NKNQSKSNNG (484 aa). The segment covering 301 to 388 has biased composition (low complexity); it reads EEPVNPNDPN…NNPNDPSNPN (88 aa). The 29 X 3 AA tandem repeats stretch occupies residues 306–392; the sequence is PNDPNDPNNP…DPSNPNNPNP (87 aa). Positions 392–407 are enriched in basic residues; the sequence is PKKRNPKRRNPNKPKP. A 20 tandem tetra-/hexapeptide repeats region spans residues 402–514; the sequence is PNKPKPNKPN…EPSNPNEPSN (113 aa). A compositionally biased stretch (pro residues) spans 408 to 464; that stretch reads NKPNPNKPNPNEPSNPNKPNPNEPSNPNKPNPNEPSNPNKPNPNEPSNPNKPNPNEP. Residues 465–567 show a composition bias toward low complexity; sequence LNPNEPSNPN…KEPSNPNEPS (103 aa). Tandem repeats lie at residues 603–613 and 614–624. Residues 603 to 624 form a 2 X 11 AA tandem repeats region; the sequence is PEESNPKEPINPEESNPKEPIN. Residues 657 to 671 show a composition bias toward polar residues; sequence KGNNIPSNLPENPSD. Residues 709–724 are compositionally biased toward basic and acidic residues; sequence YKGHEERIPKPHRSND. Residues 764–787 form a helical membrane-spanning segment; the sequence is IAGGIIGGLAILGCAGVGYNFIAG.

It localises to the cell membrane. The sequence is that of Sporozoite surface protein 2 (SSP2) from Plasmodium yoelii yoelii.